The chain runs to 470 residues: Cysteine--tRNA ligase 1 (470 aa).

Cysteine 29 is a binding site for Zn(2+). Positions 31-41 (PTVYDDAHIGN) match the 'HIGH' region motif. Zn(2+) is bound by residues cysteine 221, histidine 246, and glutamate 250. A 'KMSKS' region motif is present at residues 279–283 (KMSKS). Lysine 282 lines the ATP pocket.

This sequence belongs to the class-I aminoacyl-tRNA synthetase family. Monomer. The cofactor is Zn(2+).

Its subcellular location is the cytoplasm. The enzyme catalyses tRNA(Cys) + L-cysteine + ATP = L-cysteinyl-tRNA(Cys) + AMP + diphosphate. This chain is Cysteine--tRNA ligase 1, found in Burkholderia lata (strain ATCC 17760 / DSM 23089 / LMG 22485 / NCIMB 9086 / R18194 / 383).